A 93-amino-acid polypeptide reads, in one-letter code: Cell division protein FtsB (93 aa).

At 1–3 (MRL) the chain is on the cytoplasmic side. The chain crosses the membrane as a helical span at residues 4–21 (FILVLTLLFGWLQYTLWF). Topologically, residues 22–93 (GKNGVSDYYT…FYRIVGEENQ (72 aa)) are periplasmic. Residues 42-75 (VNTKLQARNSEMYAEIDDLKQGLDAIEERARHEL) adopt a coiled-coil conformation.

This sequence belongs to the FtsB family. In terms of assembly, part of a complex composed of FtsB, FtsL and FtsQ.

It localises to the cell inner membrane. Its function is as follows. Essential cell division protein. May link together the upstream cell division proteins, which are predominantly cytoplasmic, with the downstream cell division proteins, which are predominantly periplasmic. The protein is Cell division protein FtsB of Vibrio vulnificus (strain YJ016).